We begin with the raw amino-acid sequence, 134 residues long: MSWQTYVDDHLMCDIEGHEGHRLIAAAIVGHDGSVWAQSATFPQFKPEEMNGIMTDFNEPGHLAPTGLHLGGTKYMVIQGEAGAVIRGKKGSGGITIKKTGQALVCGIYEEPVTPGQCNMVVERLGDYLLEQGL.

Cysteines 13 and 118 form a disulfide. An Involved in PIP2 interaction motif is present at residues 84–100 (AVIRGKKGSGGITIKKT). T114 carries the post-translational modification Phosphothreonine.

This sequence belongs to the profilin family. In terms of assembly, occurs in many kinds of cells as a complex with monomeric actin in a 1:1 ratio. Post-translationally, phosphorylated by MAP kinases.

It localises to the cytoplasm. The protein localises to the cytoskeleton. In terms of biological role, binds to actin and affects the structure of the cytoskeleton. At high concentrations, profilin prevents the polymerization of actin, whereas it enhances it at low concentrations. The sequence is that of Profilin-2 from Olea europaea (Common olive).